The sequence spans 792 residues: Phenylalanine--tRNA ligase beta subunit (792 aa).

The tRNA-binding domain occupies 39–147 (GEALDLILVA…EDAPIGTPLA (109 aa)). Residues 400 to 475 (PAPASILLRR…RIRGYEHLPT (76 aa)) form the B5 domain. 4 residues coordinate Mg(2+): Asp453, Asp459, Glu462, and Glu463. One can recognise an FDX-ACB domain in the interval 698–791 (SRFPFVRRDL…IQQRHDVRIR (94 aa)).

Belongs to the phenylalanyl-tRNA synthetase beta subunit family. Type 1 subfamily. In terms of assembly, tetramer of two alpha and two beta subunits. Mg(2+) serves as cofactor.

It is found in the cytoplasm. The catalysed reaction is tRNA(Phe) + L-phenylalanine + ATP = L-phenylalanyl-tRNA(Phe) + AMP + diphosphate + H(+). This is Phenylalanine--tRNA ligase beta subunit from Xylella fastidiosa (strain Temecula1 / ATCC 700964).